The primary structure comprises 63 residues: Large ribosomal subunit protein uL30 (63 aa).

The protein belongs to the universal ribosomal protein uL30 family. Part of the 50S ribosomal subunit.

The sequence is that of Large ribosomal subunit protein uL30 from Xylella fastidiosa (strain 9a5c).